We begin with the raw amino-acid sequence, 488 residues long: C2H2-type transcription factor MSN2 (488 aa).

C2H2-type zinc fingers lie at residues 376 to 399 and 405 to 427; these read FVCDLCNRRFRRQEHLKRHYRSLH and FECNECGKKFSRSDNLAQHARTH.

The protein resides in the nucleus. It is found in the cytoplasm. In terms of biological role, transcription factor that acts as a key downstream transcription factor in the HOG1-MAPK pathway. Plays crucial roles in the regulation of conidiation, virulence and multi-stress responses. Acts as a negative regulator of proteases, lipases, as well as of the red-pigmented oosporein production, and contributes to virulence and growth in response to external pH. Contributes to the ability to infect Rhipicephalus microplus (Acari, Ixodidae) via the cuticle-penetration requiring route involving proteolytic activity at the host cuticle. Does not seem to be involved in subsequent growth and proliferation once the tick cuticle has been breached. This is C2H2-type transcription factor MSN2 from Beauveria bassiana (strain ARSEF 2860) (White muscardine disease fungus).